Here is a 361-residue protein sequence, read N- to C-terminus: Peptide chain release factor 1 (361 aa).

Q237 carries the post-translational modification N5-methylglutamine. Positions K287 to K297 are enriched in basic and acidic residues. The tract at residues K287 to N313 is disordered.

The protein belongs to the prokaryotic/mitochondrial release factor family. Methylated by PrmC. Methylation increases the termination efficiency of RF1.

The protein localises to the cytoplasm. Functionally, peptide chain release factor 1 directs the termination of translation in response to the peptide chain termination codons UAG and UAA. This Francisella tularensis subsp. tularensis (strain FSC 198) protein is Peptide chain release factor 1.